The following is a 65-amino-acid chain: Large ribosomal subunit protein bL33c (65 aa).

It belongs to the bacterial ribosomal protein bL33 family.

The protein localises to the plastid. The protein resides in the chloroplast. In Psilotum nudum (Whisk fern), this protein is Large ribosomal subunit protein bL33c.